The chain runs to 601 residues: MRLSQMLLVTLRDDPAEAEIPSHKLLIRAGYIRRIGNGIYAYLPLMLRVINKVSTIVREEMNATGAQECLLPQLQPAELWQESGRWDTYTQAEGIMFSLIDRQNRELGLGPTHEEVITTIAKDIIRSYRQLPIHLYQLQTKFRDEIRPRFGLMRGREFIMKDGYSFHADEESLKKTYQDMDKAYRNMLRRSGLQFRAVDADSGAIGGSASQEFMVLADAGEDEILYTQDGKYAANMEKAISLPVDVEASPFDTYDKLETPGTETIEKMCEFLHCSATNIVKNVLYQAVYDNGISVLVLVSIRGDQDVNDVKLLNELTRLAGNYEAKTVLALSVPDVEAQKKWAAKSLPLGYIAPDLSDDYITSSKQVSPKFLRMVDKTAVYLTNFATGSNELGNHIVGANWGQEFALPKLVVDVRKAKKGDRAVHDPSKTLETARGIEVGHIFQLGTKYSEAMGATYTNEQGQEVPLLMGCYGVGVSRLAQAAVEQSYDKDGIIWPVAIAPYHVVICIPNIKDTQQIEVAGNLYKELNEAGIDTILDDRDERAGVKFKDADLIGIPYRIVTGRSLKSGKVELIERSTHQCQEIVVAQVLSTLKDLIEKALK.

This sequence belongs to the class-II aminoacyl-tRNA synthetase family. ProS type 1 subfamily. Homodimer.

It localises to the cytoplasm. The enzyme catalyses tRNA(Pro) + L-proline + ATP = L-prolyl-tRNA(Pro) + AMP + diphosphate. Its function is as follows. Catalyzes the attachment of proline to tRNA(Pro) in a two-step reaction: proline is first activated by ATP to form Pro-AMP and then transferred to the acceptor end of tRNA(Pro). As ProRS can inadvertently accommodate and process non-cognate amino acids such as alanine and cysteine, to avoid such errors it has two additional distinct editing activities against alanine. One activity is designated as 'pretransfer' editing and involves the tRNA(Pro)-independent hydrolysis of activated Ala-AMP. The other activity is designated 'posttransfer' editing and involves deacylation of mischarged Ala-tRNA(Pro). The misacylated Cys-tRNA(Pro) is not edited by ProRS. The polypeptide is Proline--tRNA ligase (Trichodesmium erythraeum (strain IMS101)).